The sequence spans 137 residues: Small ribosomal subunit protein uS19 (137 aa).

It belongs to the universal ribosomal protein uS19 family.

Its function is as follows. Protein S19 forms a complex with S13 that binds strongly to the 16S ribosomal RNA. This chain is Small ribosomal subunit protein uS19, found in Methanoculleus marisnigri (strain ATCC 35101 / DSM 1498 / JR1).